Consider the following 316-residue polypeptide: Acetaldehyde dehydrogenase (316 aa).

Position 11 to 14 (11 to 14 (SGNI)) interacts with NAD(+). Catalysis depends on Cys131, which acts as the Acyl-thioester intermediate. Residues 162–170 (SAGPGTRAN) and Asn289 each bind NAD(+).

The protein belongs to the acetaldehyde dehydrogenase family. As to quaternary structure, interacts with MhpE.

It catalyses the reaction acetaldehyde + NAD(+) + CoA = acetyl-CoA + NADH + H(+). Its pathway is aromatic compound metabolism; 3-phenylpropanoate degradation. Catalyzes the conversion of acetaldehyde to acetyl-CoA, using NAD(+) and coenzyme A. Is the final enzyme in the meta-cleavage pathway for the degradation of aromatic compounds. The polypeptide is Acetaldehyde dehydrogenase (Escherichia coli O81 (strain ED1a)).